Here is a 548-residue protein sequence, read N- to C-terminus: Glutamyl-tRNA(Gln) amidotransferase subunit B, chloroplastic/mitochondrial (548 aa).

Belongs to the GatB/GatE family. GatB subfamily. As to quaternary structure, subunit of the heterotrimeric GatCAB amidotransferase (AdT) complex, composed of A, B and C subunits.

It localises to the mitochondrion. It is found in the plastid. Its subcellular location is the chloroplast. The enzyme catalyses L-glutamyl-tRNA(Gln) + L-glutamine + ATP + H2O = L-glutaminyl-tRNA(Gln) + L-glutamate + ADP + phosphate + H(+). In terms of biological role, allows the formation of correctly charged Gln-tRNA(Gln) through the transamidation of misacylated Glu-tRNA(Gln) in chloroplasts and mitochondria. The reaction takes place in the presence of glutamine and ATP through an activated gamma-phospho-Glu-tRNA(Gln). This Sorghum bicolor (Sorghum) protein is Glutamyl-tRNA(Gln) amidotransferase subunit B, chloroplastic/mitochondrial.